Consider the following 989-residue polypeptide: R3H domain-containing protein 2 (989 aa).

Disordered regions lie at residues 23-71 and 106-147; these read EESV…AKSN and SCPS…QEYT. Residues 36 to 56 show a composition bias toward basic and acidic residues; it reads PSKEEIEKESEDTSLRQETQR. Residue Ser-37 is modified to Phosphoserine. The segment covering 58–71 has biased composition (basic residues); sequence TSNHGHARKRAKSN. Positions 109–143 are enriched in basic and acidic residues; that stretch reads SDKEEEKSTKDVSEKEDKDKNKEKVPRRMLSRDSS. Ser-143 is modified (phosphoserine). The 64-residue stretch at 169 to 232 folds into the R3H domain; that stretch reads RMMLLKLEQE…AVIINKTSNT (64 aa). An SUZ domain is found at 233–303; the sequence is RIPEQRFSEH…VRERIFARET (71 aa). Disordered regions lie at residues 267-288, 306-390, 416-479, 493-524, 674-738, 751-793, and 848-867; these read DDNQ…EERE, NGYL…ISRP, TAQQ…FQPP, ASTG…GYMQ, GTSP…PSMV, RGQK…SLSN, and QGQS…LKSA. Basic and acidic residues predominate over residues 277–288; the sequence is DGRRSKSIEERE. Over residues 320–331 the composition is skewed to low complexity; it reads SRTSSSRQSSTD. Phosphoserine is present on residues Ser-344, Ser-347, and Ser-363. Low complexity predominate over residues 416-428; the sequence is TAQQQQQQQQQLP. 2 stretches are compositionally biased toward polar residues: residues 454–466 and 493–517; these read PFGQ…QGST and ASTG…QQVL. A compositionally biased stretch (pro residues) spans 695–704; the sequence is SPSPCSPPQM. Residues 705-727 are compositionally biased toward low complexity; that stretch reads PQQYSGVSPSGPGVVVMQLNVPN. The segment covering 761–771 has biased composition (polar residues); it reads PESSPQANTQM. Residues 772 to 790 are compositionally biased toward low complexity; that stretch reads SSSPVTSPTQSPAPSPVTS. Phosphoserine is present on residues Ser-866 and Ser-868. Residues Thr-869 and Thr-873 each carry the phosphothreonine modification.

The protein resides in the nucleus. The polypeptide is R3H domain-containing protein 2 (R3HDM2) (Bos taurus (Bovine)).